We begin with the raw amino-acid sequence, 711 residues long: Receptor-like protein 43 (711 aa).

The first 30 residues, 1–30 (MKGFWNSKSTIRITLSFIFLFISQFSDVLA), serve as a signal peptide directing secretion. The Extracellular portion of the chain corresponds to 31–666 (APTRHLCRPE…EDEEVISWIA (636 aa)). Asn-78, Asn-114, Asn-143, Asn-167, and Asn-191 each carry an N-linked (GlcNAc...) asparagine glycan. LRR repeat units lie at residues 120 to 143 (LHFL…SIEN), 144 to 168 (LSHL…IGNL), 170 to 192 (HLTF…IGNL), 193 to 216 (SHLT…IGGL), 218 to 240 (HLTT…IGNL), 241 to 266 (SNLT…NLSQ), 268 to 288 (TRLD…LWTL), and 289 to 316 (PNLF…SMGH). N-linked (GlcNAc...) asparagine glycosylation is found at Asn-239, Asn-242, Asn-252, and Asn-263. N-linked (GlcNAc...) asparagine glycans are attached at residues Asn-295, Asn-323, Asn-347, Asn-362, and Asn-372. Residues 317 to 334 (LLGSNNNFTGKIPSFICE) form an LRR 9; degenerate repeat. LRR repeat units lie at residues 335 to 358 (LRSL…CMGN), 360 to 384 (KSNL…IFEI), 386 to 406 (RSLD…LRFF), 407 to 430 (STLE…LTSL), 431 to 452 (PKLQ…EASF), 453 to 476 (LKLR…YFVK), 519 to 543 (LTIY…IGLL), 544 to 567 (KELL…MGKL), 568 to 591 (TALE…IGNL), and 593 to 616 (FLSC…QFLT). N-linked (GlcNAc...) asparagine glycosylation is present at Asn-420. An N-linked (GlcNAc...) asparagine glycan is attached at Asn-466. N-linked (GlcNAc...) asparagine glycans are attached at residues Asn-550, Asn-590, and Asn-598. Residues 667-687 (AAIGFIPGIVLGLTIGYILVF) traverse the membrane as a helical segment. Residues 688–711 (YKPEWFIKTFGRNNCRRRSTTTTH) lie on the Cytoplasmic side of the membrane.

The protein belongs to the RLP family.

The protein localises to the cell membrane. This is Receptor-like protein 43 from Arabidopsis thaliana (Mouse-ear cress).